Consider the following 124-residue polypeptide: UPF0231 protein Sbal223_3655 (124 aa).

It belongs to the UPF0231 family.

The protein is UPF0231 protein Sbal223_3655 of Shewanella baltica (strain OS223).